The chain runs to 274 residues: Exosome complex component Rrp42 (274 aa).

It belongs to the RNase PH family. Rrp42 subfamily. Component of the archaeal exosome complex. Forms a hexameric ring-like arrangement composed of 3 Rrp41-Rrp42 heterodimers. The hexameric ring associates with a trimer of Rrp4 and/or Csl4 subunits.

The protein resides in the cytoplasm. Its function is as follows. Non-catalytic component of the exosome, which is a complex involved in RNA degradation. Contributes to the structuring of the Rrp41 active site. The chain is Exosome complex component Rrp42 from Pyrococcus abyssi (strain GE5 / Orsay).